The following is a 280-amino-acid chain: MIEVTLLGTGSPIPDPNRAGPSTLVRAGGQVFLVDCGRGVLQRAAAVGVGAAGLSTLLLTHLHSDHVGDLGDVLITRWVSTFTPDPVPLPIIGPPGTAELVAATLNALRHDIGYRIAHHADLNAPPAVDVREHTDGPVWDRDGVSIRVAPTDHRPVAPTIGFRVDYQGASVVLAGDTVPCAGLDELAAGAGALVHTVIRKDIVATIPQQRLQDICDYHSSVEQAAATAARAGVGTLVMTHYVPALVAGQEEQWRALAAREFAGRVELGDDLHRVQVDAPS.

Zn(2+) contacts are provided by His-61, His-63, Asp-65, His-66, His-153, Asp-176, and His-240. The active-site Proton acceptor is Asp-65.

It belongs to the RNase Z family. Homodimer. Zn(2+) is required as a cofactor.

The enzyme catalyses Endonucleolytic cleavage of RNA, removing extra 3' nucleotides from tRNA precursor, generating 3' termini of tRNAs. A 3'-hydroxy group is left at the tRNA terminus and a 5'-phosphoryl group is left at the trailer molecule.. Zinc phosphodiesterase, which displays some tRNA 3'-processing endonuclease activity. Probably involved in tRNA maturation, by removing a 3'-trailer from precursor tRNA. This Mycobacterium avium (strain 104) protein is Ribonuclease Z.